Here is a 479-residue protein sequence, read N- to C-terminus: Adenylate kinase 8 (479 aa).

Adenylate kinase regions lie at residues 58–258 (PRIV…TYVQ) and 269–471 (PRVL…SGII). 67 to 72 (ASGKTT) contacts ATP. Residues 87 to 113 (TLENLILNEFSYTATEARRLYLQRKTV) form an NMP 1 region. AMP is bound by residues 140–143 (GIPE), glutamine 147, and arginine 203. Residues 177–206 (GKRIDPQTGEIYHTTFDWPPESEIQNRLMV) are LID 1. An ATP-binding site is contributed by 278–283 (GSGKSL). Residues 298-327 (CCGQLLKEAVADRTTFGELIQPFFEKEMAV) are NMP 2. AMP contacts are provided by residues 325–327 (MAV), 354–357 (GVPR), and glutamine 361. The interval 391–424 (LRRIDPVTGERYHLMYKPPPTMEIQARLLQNPKD) is LID 2. Position 392 (arginine 392) interacts with ATP.

The protein belongs to the adenylate kinase family. Interacts with CFAP45 and CFAP52; CFAP45 and AK8 dimerization may create a cavity at the interface of the dimer that can accommodate AMP. As to expression, expressed in respiratory cells (at protein level).

It localises to the cytoplasm. Its subcellular location is the cytosol. The protein localises to the cytoskeleton. The protein resides in the cilium axoneme. It carries out the reaction AMP + ATP = 2 ADP. The enzyme catalyses a 2'-deoxyribonucleoside 5'-diphosphate + ATP = a 2'-deoxyribonucleoside 5'-triphosphate + ADP. It catalyses the reaction a ribonucleoside 5'-diphosphate + ATP = a ribonucleoside 5'-triphosphate + ADP. In terms of biological role, nucleoside monophosphate (NMP) kinase that catalyzes the reversible transfer of the terminal phosphate group between nucleoside triphosphates and monophosphates. Has highest activity toward AMP, and weaker activity toward dAMP, CMP and dCMP. Also displays broad nucleoside diphosphate kinase activity. This Homo sapiens (Human) protein is Adenylate kinase 8 (AK8).